The following is a 153-amino-acid chain: Lipoprotein signal peptidase (153 aa).

Helical transmembrane passes span 11–31 (ILILTIAGIFIIDQNIKSLFV), 39–59 (DCIDLILVYNKGVAFSMFAFL), and 68–88 (LVLVFGVFGYMLYLNQLCYAI). Catalysis depends on residues Asp-112 and Asp-129. The helical transmembrane segment at 122–142 (FAVFNFADVMIDVAVVWILLL) threads the bilayer.

The protein belongs to the peptidase A8 family.

Its subcellular location is the cell inner membrane. The enzyme catalyses Release of signal peptides from bacterial membrane prolipoproteins. Hydrolyzes -Xaa-Yaa-Zaa-|-(S,diacylglyceryl)Cys-, in which Xaa is hydrophobic (preferably Leu), and Yaa (Ala or Ser) and Zaa (Gly or Ala) have small, neutral side chains.. It functions in the pathway protein modification; lipoprotein biosynthesis (signal peptide cleavage). Its function is as follows. This protein specifically catalyzes the removal of signal peptides from prolipoproteins. This chain is Lipoprotein signal peptidase, found in Sulfurimonas denitrificans (strain ATCC 33889 / DSM 1251) (Thiomicrospira denitrificans (strain ATCC 33889 / DSM 1251)).